The following is a 144-amino-acid chain: Large ribosomal subunit protein uL16 (144 aa).

The segment covering 1-19 (MLLPKRVKYRRQHRPKTTG) has biased composition (basic residues). The interval 1 to 23 (MLLPKRVKYRRQHRPKTTGRSKG) is disordered.

The protein belongs to the universal ribosomal protein uL16 family. In terms of assembly, part of the 50S ribosomal subunit.

In terms of biological role, binds 23S rRNA and is also seen to make contacts with the A and possibly P site tRNAs. This chain is Large ribosomal subunit protein uL16, found in Staphylococcus carnosus (strain TM300).